Consider the following 422-residue polypeptide: Dioxygenase str8 (422 aa).

Residues C73, C75, C78, and H119 each coordinate Zn(2+). Fe cation is bound by residues H243, D245, and H382.

This sequence belongs to the gamma-BBH/TMLD family. It depends on Fe(2+) as a cofactor.

It participates in mycotoxin biosynthesis. In terms of biological role, dioxygenase; part of the gene cluster that mediates the biosynthesis of strobilurin A, an antifungal polyketide that contains a key beta-methoxyacrylate toxophore that targets the complex III of the mitochondrial electron transport chain. Strobilurin biosynthesis begins with construction of benzoyl CoA by step-wise elimination of ammonia from phenylalanine by the phenylalanine ammonia-lyase str11, oxygenation by str8 and retro-Claisen reaction to form benzoic acid, which is activated to its CoA thiolester benzoyl CoA by the dedicated CoA ligase str10. Benzoyl CoA forms the starter unit for the highly reducing polyketide synthase stpks1 that produces the polyketide prestrobilutin A. The FAD-dependent oxygenase str9 then catalyzes the key oxidative rearrangement responsible for the creation of the beta-methoxyacrylate toxophore. Str9 performs epoxidation of the 2,3 olefin of prestrobilutin A, followed by Meinwald rearrangement to furnish the aldehyde intermediate. Rapid enolization of the aldehyde intermediate would give the beta-methoxyacrylate skeleton and methylations catalyzed by str2 and str3 complete the synthesis and lead to the production of strobilurin A. The short-chain dehydrogenase stl2 and the dehydrogenase str4 play a role in the shunt pathway leading to the production of bolineol. The cluster encodes no obvious halogenase gene that could be involved in production of strobilurin B, nor any obvious dimethylallyl-transferase that could be involved in the production of strobilurin G. It is possible that unknown proteins encoded in, or near, the cluster (such as str1 or stl1) may form new classes of halogenases or dimethylally-transferases, or that the responsible genes are located elsewhere on the genome. Similarly, proteins encoded by str5/str6 hydrolases appear to have no chemical role in the biosynthesis of strobilurin A. Finally, no obvious self-resistance gene is found within the cluster. The protein is Dioxygenase str8 of Strobilurus tenacellus.